Consider the following 297-residue polypeptide: Cytosolic Fe-S cluster assembly factor CFD1 (297 aa).

15–22 (GKGGVGKS) lines the ATP pocket. Residues Cys216 and Cys219 each contribute to the [4Fe-4S] cluster site.

The protein belongs to the Mrp/NBP35 ATP-binding proteins family. NUBP2/CFD1 subfamily. In terms of assembly, heterotetramer of 2 NBP35 and 2 CFD1 chains. [4Fe-4S] cluster serves as cofactor.

The protein localises to the cytoplasm. In terms of biological role, component of the cytosolic iron-sulfur (Fe/S) protein assembly (CIA) machinery. Required for maturation of extramitochondrial Fe-S proteins. The NBP35-CFD1 heterotetramer forms a Fe-S scaffold complex, mediating the de novo assembly of an Fe-S cluster and its transfer to target apoproteins. This Phaeosphaeria nodorum (strain SN15 / ATCC MYA-4574 / FGSC 10173) (Glume blotch fungus) protein is Cytosolic Fe-S cluster assembly factor CFD1.